A 601-amino-acid polypeptide reads, in one-letter code: Leucine-rich repeat-containing protein 40 (601 aa).

21 LRR repeats span residues 33-56, 79-101, 102-124, 125-148, 150-170, 171-193, 194-217, 219-239, 240-264, 266-285, 286-308, 309-334, 336-355, 397-420, 423-446, 447-469, 470-492, 493-516, 518-539, 540-563, and 565-586; these read ARKS…VWRL, QTDL…DVKL, LPAL…SIGD, LEQL…VWRL, NLRC…DLGQ, LVNL…SLAN, LQNL…ISQM, NLRM…VLAQ, MESL…CCKT, KELH…HLKH, LNAL…EITL, LQGL…TLPK, KSLS…LLTK, IKTL…VFDA, GNPV…IVDL, KDSL…DFCH, LKQL…ELEG, LIKL…LYRI, SLET…QMKT, LSRL…LGNC, and SLRA…ILIK.

This chain is Leucine-rich repeat-containing protein 40 (lrrc40), found in Danio rerio (Zebrafish).